A 1153-amino-acid polypeptide reads, in one-letter code: Nitric oxide synthase (1153 aa).

Position 3 (Ser-3) interacts with (6R)-L-erythro-5,6,7,8-tetrahydrobiopterin. Cys-82 provides a ligand contact to heme b. L-arginine is bound by residues Gln-145, Trp-254, and Asn-264. Residue Phe-358 participates in (6R)-L-erythro-5,6,7,8-tetrahydrobiopterin binding. Residues 397–417 (PKRKLGFKALARAVEFSASLM) form a calmodulin-binding region. Positions 427–610 (CSIFYATETG…SFRAWSEEVF (184 aa)) constitute a Flavodoxin-like domain. 556-587 (VFGLGSKAYPYYAAYGKYIYLMLQELGAERLV) is a binding site for FMN. An FAD-binding FR-type domain is found at 660–903 (KEVMPLILAE…LRSAPHFHLP (244 aa)). Residues 697–708 (YAPGDHVAIFPA) and 836–846 (LQPRYYSISSS) contribute to the FAD site. NADP(+) is bound at residue 911–929 (IMIGPGSGIAPFRSFWQQR). Repeat copies occupy residues 934–940 (ENTMPSC), 941–947 (ENTMLSC), 948–954 (ETTIPSC), 955–961 (ENSMPSC), 962–968 (ENTMPSC), 969–975 (ENTMPSC), 976–982 (ENTIPSC), 983–989 (ENTIPSC), 990–996 (ENTMPSC), 997–1003 (ENTIPSW), and 1004–1010 (ERTMQPC). The tract at residues 934 to 1010 (ENTMPSCENT…PSWERTMQPC (77 aa)) is 11 X 7 AA tandem repeats of E-[NTR]-[ST]-[IM]-[PLQ]-[SP]-[CW]. An NADP(+)-binding site is contributed by 1089–1104 (GGHFYVSGDVSMAHDV).

It belongs to the NOS family. It depends on heme b as a cofactor. The cofactor is FAD. FMN is required as a cofactor. As to expression, expressed in the central nervous system, in the serotonergic cerebral giant cells. The isoform Long and isoform Short are expressed equally in the CNS.

The catalysed reaction is 2 L-arginine + 3 NADPH + 4 O2 + H(+) = 2 L-citrulline + 2 nitric oxide + 3 NADP(+) + 4 H2O. With respect to regulation, stimulated by calcium/calmodulin. Functionally, produces nitric oxide (NO) which is a messenger molecule with diverse functions throughout the body. The polypeptide is Nitric oxide synthase (NOS) (Lymnaea stagnalis (Great pond snail)).